Reading from the N-terminus, the 296-residue chain is Bidirectional sugar transporter SWEET13 (296 aa).

The Extracellular segment spans residues 1–9; that stretch reads MAGLSLQHP. The chain crosses the membrane as a helical span at residues 10 to 30; the sequence is WAFAFGLLGNLISFTTYLAPI. Residues 13–98 enclose the MtN3/slv 1 domain; the sequence is AFGLLGNLIS…VMYLAYAPKK (86 aa). The Cytoplasmic portion of the chain corresponds to 31–45; that stretch reads PTFYRIYKSKSTEGF. A helical transmembrane segment spans residues 46-66; the sequence is QSVPYVVALFSAMLWIFYALI. Topologically, residues 67–71 are extracellular; sequence KSNEA. The chain crosses the membrane as a helical span at residues 72 to 92; the sequence is LLITINAAGCVIETIYIVMYL. Residues 93–105 lie on the Cytoplasmic side of the membrane; the sequence is AYAPKKAKVFTTK. Residues 106-126 traverse the membrane as a helical segment; the sequence is ILLLLNVGVFGVILLLTLLLS. At 127–133 the chain is on the extracellular side; sequence HGEQRVV. The helical transmembrane segment at 134-154 threads the bilayer; it reads SLGWVCVAFSVSVFVAPLSII. In terms of domain architecture, MtN3/slv 2 spans 134–217; the sequence is SLGWVCVAFS…MGLYVFYMNA (84 aa). The Cytoplasmic portion of the chain corresponds to 155–167; that stretch reads KRVIQSRSVEYMP. The chain crosses the membrane as a helical span at residues 168-188; the sequence is FSLSLTLTLSAVVWFLYGLLI. Residues 189 to 192 are Extracellular-facing; that stretch reads KDKY. Residues 193 to 213 traverse the membrane as a helical segment; it reads VALPNILGFTFGVVQMGLYVF. At 214–296 the chain is on the cytoplasmic side; it reads YMNATPVAGE…PPRAVEVAAV (83 aa).

Belongs to the SWEET sugar transporter family. Forms homooligomers and/or heterooligomers.

Its subcellular location is the cell membrane. Functionally, mediates both low-affinity uptake and efflux of sugar across the plasma membrane. Its function is as follows. Confers blight susceptibility. Confers TAL effector-mediated susceptibility to Xanthomonas oryzae pv. oryzae. The polypeptide is Bidirectional sugar transporter SWEET13 (SWEET13) (Oryza sativa subsp. japonica (Rice)).